Reading from the N-terminus, the 538-residue chain is Methionine--tRNA ligase (538 aa).

A 'HIGH' region motif is present at residues 21-31 (YYVNDAPHLGH). Zn(2+)-binding residues include Cys-137, Cys-140, Cys-162, and His-165. Residues 313–317 (KMSKS) carry the 'KMSKS' region motif. An ATP-binding site is contributed by Lys-316.

Belongs to the class-I aminoacyl-tRNA synthetase family. MetG type 2A subfamily. In terms of assembly, monomer. Requires Zn(2+) as cofactor.

The protein localises to the cytoplasm. The enzyme catalyses tRNA(Met) + L-methionine + ATP = L-methionyl-tRNA(Met) + AMP + diphosphate. Functionally, is required not only for elongation of protein synthesis but also for the initiation of all mRNA translation through initiator tRNA(fMet) aminoacylation. This chain is Methionine--tRNA ligase, found in Streptomyces coelicolor (strain ATCC BAA-471 / A3(2) / M145).